The chain runs to 152 residues: Ribonuclease HI (152 aa).

The 142-residue stretch at 1–142 (MDSKVVIYTD…ADKLAVQGRE (142 aa)) folds into the RNase H type-1 domain. Residues Asp10, Glu48, Asp70, and Asp134 each contribute to the Mg(2+) site.

Belongs to the RNase H family. In terms of assembly, monomer. Requires Mg(2+) as cofactor.

The protein resides in the cytoplasm. It carries out the reaction Endonucleolytic cleavage to 5'-phosphomonoester.. In terms of biological role, endonuclease that specifically degrades the RNA of RNA-DNA hybrids. This is Ribonuclease HI from Rickettsia conorii (strain ATCC VR-613 / Malish 7).